Consider the following 359-residue polypeptide: RNA 3'-terminal phosphate cyclase (359 aa).

ATP-binding positions include glutamine 100 and 291–294 (HASD). The Tele-AMP-histidine intermediate role is filled by histidine 317.

The protein belongs to the RNA 3'-terminal cyclase family. Type 1 subfamily.

It localises to the cytoplasm. The enzyme catalyses a 3'-end 3'-phospho-ribonucleotide-RNA + ATP = a 3'-end 2',3'-cyclophospho-ribonucleotide-RNA + AMP + diphosphate. In terms of biological role, catalyzes the conversion of 3'-phosphate to a 2',3'-cyclic phosphodiester at the end of RNA. The mechanism of action of the enzyme occurs in 3 steps: (A) adenylation of the enzyme by ATP; (B) transfer of adenylate to an RNA-N3'P to produce RNA-N3'PP5'A; (C) and attack of the adjacent 2'-hydroxyl on the 3'-phosphorus in the diester linkage to produce the cyclic end product. The biological role of this enzyme is unknown but it is likely to function in some aspects of cellular RNA processing. The sequence is that of RNA 3'-terminal phosphate cyclase from Hyperthermus butylicus (strain DSM 5456 / JCM 9403 / PLM1-5).